We begin with the raw amino-acid sequence, 249 residues long: Methyltransferase 1 (249 aa).

Belongs to the FkbM methyltransferase family.

It functions in the pathway secondary metabolite biosynthesis. Methyltransferase; part of the pathway that mediates the biosynthesis of tenellin-type 2-pyridones, iron-chelating compounds involved in iron stress tolerance, competition with the natural competitor fungus Metarhizium robertsii and insect hosts infection. Methylates pyridovericin-N-O-(beta-D-glucopyranoside) produced by the UDP-glucosyltransferase GT1 to yield pyridovericin-N-O-(4-O-methyl-beta-D-glucopyranoside) (PMGP). The pathway begins with the assembly of the polyketide-amino acid backbone by the hybrid PKS-NRPS tenS with the help of the enoyl reductase tenC. These enzymes catalyze the synthesis of the pyrrolidine-2-dione intermediates pretellinin A, 11-hydropretellenin A, 12-hydropretellenin A, 13-hydropretellenin A, 14-hydropretellenin A, 12-oxopretellenin A and prototellinin D. The cytochrome P450 monooxygenase tenA then catalyzes an oxidative ring expansion of pretenellin A and 14-hydropretellenin A to form the 2-pyridone core, leading to pretenellin B and pyridovericin, respectively. The cytochrome P450 monooxygenase tenB is then required for the selective N-hydroxylation of the 2-pyridone nitrogen of yield tellinin and 15-hydroxytellenin (15-HT), respectively. The UDP-glucosyltransferase GT1 and the methyltransferase MT1, located outside the tenS gene cluster, contribute to the stepwise glycosylation and methylation of 15-HT to obtain the glycoside pyridovericin-N-O-(4-O-methyl-beta-D-glucopyranoside) (PMGP). Additional related compounds such as 1-O-methyl-15-HT, (8Z)-1-O-methyl-15-HT, and O-methyltenellin A are also produced but the enzymes involved in their biosynthesis have still to be determined. The polypeptide is Methyltransferase 1 (Beauveria bassiana (strain ARSEF 2860) (White muscardine disease fungus)).